The sequence spans 87 residues: Small ribosomal subunit protein bS18 (87 aa).

The protein belongs to the bacterial ribosomal protein bS18 family. In terms of assembly, part of the 30S ribosomal subunit. Forms a tight heterodimer with protein bS6.

Its function is as follows. Binds as a heterodimer with protein bS6 to the central domain of the 16S rRNA, where it helps stabilize the platform of the 30S subunit. This chain is Small ribosomal subunit protein bS18, found in Campylobacter hominis (strain ATCC BAA-381 / DSM 21671 / CCUG 45161 / LMG 19568 / NCTC 13146 / CH001A).